The sequence spans 347 residues: NADH-ubiquinone oxidoreductase chain 2 (347 aa).

The next 11 membrane-spanning stretches (helical) occupy residues 3 to 23 (PLIF…VMIS), 25 to 45 (HWLM…PVLM), 59 to 79 (YFLT…INLL), 96 to 116 (IIMT…FWVP), 122 to 142 (VSLT…LSVL), 145 to 165 (IAPV…IMIG), 178 to 198 (ILAY…IFNP), 202 to 222 (LLNL…FMTV), 240 to 260 (ITTS…LTGF), 276 to 296 (IILA…YMRL), and 326 to 346 (LSPL…MMIL).

It belongs to the complex I subunit 2 family. Core subunit of respiratory chain NADH dehydrogenase (Complex I) which is composed of 45 different subunits. Interacts with TMEM242.

The protein localises to the mitochondrion inner membrane. The enzyme catalyses a ubiquinone + NADH + 5 H(+)(in) = a ubiquinol + NAD(+) + 4 H(+)(out). Functionally, core subunit of the mitochondrial membrane respiratory chain NADH dehydrogenase (Complex I) which catalyzes electron transfer from NADH through the respiratory chain, using ubiquinone as an electron acceptor. Essential for the catalytic activity and assembly of complex I. This chain is NADH-ubiquinone oxidoreductase chain 2, found in Peropteryx macrotis (Lesser dog-like bat).